We begin with the raw amino-acid sequence, 287 residues long: Maleylpyruvate hydrolase (287 aa).

3 residues coordinate a divalent metal cation: glutamate 143, glutamate 145, and aspartate 174.

The protein belongs to the FAH family. As to quaternary structure, homodimer.

It carries out the reaction 3-maleylpyruvate + H2O = maleate + pyruvate + H(+). With respect to regulation, activated by Mn(2+). Inhibited by Ni(2+), Cd(2+), Co(2+) or Cu(2+). Functionally, involved in the degradation of gentisate. Catalyzes the hydrolysis of 3-maleylpyruvate, the ring-cleavage product of gentisate. The sequence is that of Maleylpyruvate hydrolase from Aquipseudomonas alcaligenes (Pseudomonas alcaligenes).